The following is a 780-amino-acid chain: ATP-dependent 6-phosphofructokinase, liver type (780 aa).

An N-acetylalanine modification is found at alanine 2. An N-terminal catalytic PFK domain 1 region spans residues 2–390 (ASVDLEKLRT…NWNIYKLLSH (389 aa)). ATP is bound by residues glycine 25, 88-89 (RC), and 118-121 (GDGS). A Mg(2+)-binding site is contributed by aspartate 119. Residues 164-166 (SID), arginine 201, 208-210 (MGR), glutamate 264, arginine 292, and 298-301 (HVQR) each bind substrate. Aspartate 166 serves as the catalytic Proton acceptor. Phosphoserine is present on serine 377. The segment at 391–400 (QKISKEKTNF) is interdomain linker. Residues 401–780 (SLAILNVGAP…RRTLSIETGF (380 aa)) form a C-terminal regulatory PFK domain 2 region. Residues arginine 470, 527–531 (TISNN), arginine 565, 572–574 (MGG), and glutamate 628 contribute to the beta-D-fructose 2,6-bisphosphate site. Residue serine 529 is glycosylated (O-linked (GlcNAc) serine). Tyrosine 640 carries the post-translational modification Phosphotyrosine. Beta-D-fructose 2,6-bisphosphate contacts are provided by residues arginine 654, 660–663 (HLQQ), and arginine 734. Serine 775 is modified (phosphoserine).

It belongs to the phosphofructokinase type A (PFKA) family. ATP-dependent PFK group I subfamily. Eukaryotic two domain clade 'E' sub-subfamily. In terms of assembly, homo- and heterotetramers. Phosphofructokinase (PFK) enzyme functions as a tetramer composed of different combinations of 3 types of subunits, called PFKM (M), PFKL (L) and PFKP (P). The composition of the PFK tetramer differs according to the tissue type it is present in. The kinetic and regulatory properties of the tetrameric enzyme are dependent on the subunit composition, hence can vary across tissues. Mg(2+) is required as a cofactor. In terms of processing, glcNAcylation at Ser-529 by OGT decreases enzyme activity, leading to redirect glucose flux through the oxidative pentose phosphate pathway. Glycosylation is stimulated by both hypoxia and glucose deprivation.

Its subcellular location is the cytoplasm. It carries out the reaction beta-D-fructose 6-phosphate + ATP = beta-D-fructose 1,6-bisphosphate + ADP + H(+). It participates in carbohydrate degradation; glycolysis; D-glyceraldehyde 3-phosphate and glycerone phosphate from D-glucose: step 3/4. Allosterically activated by ADP, AMP, or fructose 2,6-bisphosphate, and allosterically inhibited by ATP or citrate. GlcNAcylation by OGT overcomes allosteric regulation. Catalyzes the phosphorylation of D-fructose 6-phosphate to fructose 1,6-bisphosphate by ATP, the first committing step of glycolysis. Negatively regulates the phagocyte oxidative burst in response to bacterial infection by controlling cellular NADPH biosynthesis and NADPH oxidase-derived reactive oxygen species. Upon macrophage activation, drives the metabolic switch toward glycolysis, thus preventing glucose turnover that produces NADPH via pentose phosphate pathway. This chain is ATP-dependent 6-phosphofructokinase, liver type (PFKL), found in Bos taurus (Bovine).